A 262-amino-acid polypeptide reads, in one-letter code: MRVLVSNDDGVDAPGIKILADALRNAGHEVMVVAPDRDRSGASNSLTLDTPIRAKQIDMHTYSVAGTPTDCVHLALTGLLNYDPDIVVSGINNTGNLGDDVIYSGTVSAAMEGRFLGLPAVAVSLVTLYREGQQAPQYETAAHAAINIVAQLKTDPLPADTILNVNVPDVTWQQMRGFKVTRLGNRHRSAPCLTQTDPRGHTIYWIGPAGPEQDAGPGTDFDAVRNTYISITPIHVDLTRYQALENVTRWTDRLTAHMDWPT.

Positions 8, 9, 40, and 92 each coordinate a divalent metal cation.

Belongs to the SurE nucleotidase family. A divalent metal cation serves as cofactor.

Its subcellular location is the cytoplasm. The enzyme catalyses a ribonucleoside 5'-phosphate + H2O = a ribonucleoside + phosphate. Functionally, nucleotidase that shows phosphatase activity on nucleoside 5'-monophosphates. The protein is 5'-nucleotidase SurE of Xylella fastidiosa (strain 9a5c).